The sequence spans 480 residues: uncharacterized protein (480 aa).

The interval 1–20 (MDVKDTGINRSDTPISDQDH) is disordered.

This is an uncharacterized protein from Arabidopsis thaliana (Mouse-ear cress).